Here is a 573-residue protein sequence, read N- to C-terminus: Solute carrier family 41 member 2 (573 aa).

Residues 1–162 lie on the Extracellular side of the membrane; sequence MTNSKGRSIT…KESSGIMALQ (162 aa). A phosphoserine mark is found at Ser-136 and Ser-137. The helical transmembrane segment at 163-183 threads the bilayer; the sequence is ILVPFLLAGFGTVSAGMVLDI. The Cytoplasmic segment spans residues 184–195; it reads VQHWEVFRKVTE. The helical transmembrane segment at 196–216 threads the bilayer; that stretch reads VFILVPALLGLKGNLEMTLAS. The Extracellular portion of the chain corresponds to 217–245; the sequence is RLSTAVNIGKMDSPIEKWNLIIGNLALKQ. A helical transmembrane segment spans residues 246 to 266; it reads VQATVVGFLAAVAAIILGWIP. The Cytoplasmic portion of the chain corresponds to 267 to 282; the sequence is EGKYYLDHSILLCSSS. Residues 283–303 form a helical membrane-spanning segment; that stretch reads VATAFIASLLQGIIMVGVIVG. The Extracellular segment spans residues 304–313; the sequence is SKKTGINPDN. The helical transmembrane segment at 314-334 threads the bilayer; that stretch reads VATPIAASFGDLITLAILAWI. At 335–347 the chain is on the cytoplasmic side; the sequence is SQGLYSCLETYYY. Residues 348–368 traverse the membrane as a helical segment; the sequence is ISPLVGVFFLALTPIWIIIAA. Topologically, residues 369–376 are extracellular; the sequence is KHPATRTV. The chain crosses the membrane as a helical span at residues 377-397; that stretch reads LHSGWEPVITAMVISSIGGLI. The Cytoplasmic portion of the chain corresponds to 398-406; the sequence is LDTTVSDPN. A helical membrane pass occupies residues 407-427; that stretch reads LVGIVVYTPVINGIGGNLVAI. The Extracellular segment spans residues 428–469; sequence QASRISTYLHLHSIPGELPDEPKGCYYPFRTFFGPGVNNKSA. The helical transmembrane segment at 470 to 490 threads the bilayer; that stretch reads QVLLLLVIPGHLIFLYTIHLM. The Cytoplasmic segment spans residues 491-498; the sequence is KSGHTSLT. A helical membrane pass occupies residues 499 to 519; sequence IIFIVVYLFAAVLQVFTLLWI. The Extracellular segment spans residues 520 to 543; sequence ADWMVHHFWRKGKDPDSFSIPYLT. A helical membrane pass occupies residues 544–564; the sequence is ALGDLLGTALLALSFHFLWLI. At 565 to 573 the chain is on the cytoplasmic side; the sequence is GDRDGDVGD.

This sequence belongs to the SLC41A transporter family.

It localises to the cell membrane. It carries out the reaction Mg(2+)(in) = Mg(2+)(out). It catalyses the reaction Mn(2+)(in) = Mn(2+)(out). The enzyme catalyses Co(2+)(in) = Co(2+)(out). The catalysed reaction is Ni(2+)(in) = Ni(2+)(out). It carries out the reaction Fe(2+)(in) = Fe(2+)(out). In terms of biological role, acts as a plasma-membrane magnesium transporter. Can also mediate the transport of other divalent metal cations in an order of Ba(2+) &gt; Ni(2+) &gt; Co(2+) &gt; Fe(2+) &gt; Mn(2+). This Macaca fascicularis (Crab-eating macaque) protein is Solute carrier family 41 member 2 (SLC41A2).